The following is a 299-amino-acid chain: DNA-binding transcriptional activator HetR (299 aa).

Serine 152 is an active-site residue.

Belongs to the peptidase S48 family. In terms of assembly, homodimer; disulfide-linked.

In terms of biological role, might be involved in temporal and/or spatial regulation of nitrogen fixation. Dimerization is required for DNA-binding. Has both a protease and a DNA-binding activity. This chain is DNA-binding transcriptional activator HetR, found in Leptolyngbya boryana (Plectonema boryanum).